The chain runs to 240 residues: MSVNLASQLREGTKKSHSMAENVGFVKCFLKGVVEKNSYRKLVGNLYFVYSAMEEEMAKFKDHPILSHIYFPELNRKQSLEQDLQFYYGSNWRQEVKISAAGQAYVDRVRQVAATAPELLVAHSYTRYLGDLSGGQILKKIAQNAMNLHDGGTAFYEFADIDDEKAFKNTYRQAMNDLPIDQATAERIVDEANDAFAMNMKMFNELEGNLIKAIGIMVFNSLTRRRSQGSTEVGLATSEG.

Heme b contacts are provided by Arg-10, His-17, Tyr-125, Lys-168, and Arg-172.

Belongs to the heme oxygenase family.

The catalysed reaction is heme b + 3 reduced [NADPH--hemoprotein reductase] + 3 O2 = biliverdin IXalpha + CO + Fe(2+) + 3 oxidized [NADPH--hemoprotein reductase] + 3 H2O + H(+). Catalyzes the opening of the heme ring with the release of iron. Key enzyme in the synthesis of the chromophoric part of the photosynthetic antennae. This is Heme oxygenase 1 (pbsA1) from Synechocystis sp. (strain ATCC 27184 / PCC 6803 / Kazusa).